A 917-amino-acid polypeptide reads, in one-letter code: Nitrate reductase [NADH] 2 (917 aa).

A disordered region spans residues 1–72; the sequence is MAASVDNRQY…SEDENETHNS (72 aa). Over residues 37-47 the composition is skewed to polar residues; that stretch reads AHQNQTTNQTV. A compositionally biased stretch (acidic residues) spans 57–67; sequence DDEDVSSEDEN. Mo-molybdopterin is bound at residue cysteine 191. The Cytochrome b5 heme-binding domain maps to 542–617; the sequence is AKMYSMSEVK…LEDYRIGELI (76 aa). 2 residues coordinate heme: histidine 577 and histidine 600. Residues 660-772 form the FAD-binding FR-type domain; sequence RAKVPVQLVE…KGPLGHVEYL (113 aa). Residues 712–715, 729–733, phenylalanine 734, phenylalanine 741, 746–748, and threonine 799 contribute to the FAD site; these read RAYT, VVKIY, and LMS.

It belongs to the nitrate reductase family. Homodimer. FAD serves as cofactor. Heme is required as a cofactor. It depends on Mo-molybdopterin as a cofactor. Root, leaf, and shoot.

The enzyme catalyses nitrite + NAD(+) + H2O = nitrate + NADH + H(+). In terms of biological role, nitrate reductase is a key enzyme involved in the first step of nitrate assimilation in plants, fungi and bacteria. This Arabidopsis thaliana (Mouse-ear cress) protein is Nitrate reductase [NADH] 2 (NIA2).